Here is a 264-residue protein sequence, read N- to C-terminus: E3 ubiquitin-protein ligase MARCHF8 (264 aa).

Positions 15 to 47 (LGHSVSRSSNISKAGSPTSVSAPSRFPRTSVTP) are disordered. Residues 16-47 (GHSVSRSSNISKAGSPTSVSAPSRFPRTSVTP) show a composition bias toward polar residues. An RING-CH-type zinc finger spans residues 45 to 106 (VTPSSQDICR…ELCKFEFIME (62 aa)). Zn(2+) contacts are provided by Cys-53, Cys-56, Cys-70, Cys-72, His-80, Cys-83, Cys-96, and Cys-99. A run of 2 helical transmembrane segments spans residues 130 to 150 (CSVTFHVIAITCVVWSLYVLI) and 170 to 190 (FWTKLVVVAIGFTGGLLFMYV).

The protein localises to the cytoplasmic vesicle membrane. It is found in the lysosome membrane. It localises to the early endosome membrane. The enzyme catalyses S-ubiquitinyl-[E2 ubiquitin-conjugating enzyme]-L-cysteine + [acceptor protein]-L-lysine = [E2 ubiquitin-conjugating enzyme]-L-cysteine + N(6)-ubiquitinyl-[acceptor protein]-L-lysine.. Its pathway is protein modification; protein ubiquitination. In terms of biological role, E3 ubiquitin-protein ligase that mediates ubiquitination of cd86 and MHC class II proteins, such as hla-dr alpha and beta, and promotes their subsequent endocytosis and sorting to lysosomes via multivesicular bodies. The protein is E3 ubiquitin-protein ligase MARCHF8 (marchf8) of Xenopus laevis (African clawed frog).